We begin with the raw amino-acid sequence, 625 residues long: UvrABC system protein C (625 aa).

Residues 13–92 form the GIY-YIG domain; it reads DKPGVYIMKD…IKKHRPKFNI (80 aa). The region spanning 204–239 is the UVR domain; sequence EDIIKKLEKDMKEAADNLEFERAARIRDKINSLKHI.

The protein belongs to the UvrC family. Interacts with UvrB in an incision complex.

The protein resides in the cytoplasm. The UvrABC repair system catalyzes the recognition and processing of DNA lesions. UvrC both incises the 5' and 3' sides of the lesion. The N-terminal half is responsible for the 3' incision and the C-terminal half is responsible for the 5' incision. The sequence is that of UvrABC system protein C from Acetivibrio thermocellus (strain ATCC 27405 / DSM 1237 / JCM 9322 / NBRC 103400 / NCIMB 10682 / NRRL B-4536 / VPI 7372) (Clostridium thermocellum).